Here is a 433-residue protein sequence, read N- to C-terminus: Metacaspase-1 (433 aa).

The segment at 1 to 123 (MYPGRAKPTY…PPSQVQHTGP (123 aa)) is disordered. The segment covering 9-44 (TYNNQQAQQAQSQVGYQTGYSNAQPQQQYYTAPQQQ) has biased composition (low complexity). 2 stretches are compositionally biased toward polar residues: residues 45–55 (NVSGSSMSFQH) and 83–109 (QQNYRNDIQQNHASGTVNGPSGYQQPQ). Active-site residues include His222 and Cys278.

Belongs to the peptidase C14B family.

Functionally, involved in cell death (apoptosis). The protein is Metacaspase-1 (MCA1) of Kluyveromyces lactis (strain ATCC 8585 / CBS 2359 / DSM 70799 / NBRC 1267 / NRRL Y-1140 / WM37) (Yeast).